The chain runs to 147 residues: Large ribosomal subunit protein uL15 (147 aa).

The tract at residues 1–58 is disordered; sequence MKLHELKPAQGSTKAPKRLGRGIGSGTGKTSGKGHKGQKARAGGGVRPGFEGGQQPLA. 2 stretches are compositionally biased toward gly residues: residues 21–31 and 42–52; these read RGIGSGTGKTS and AGGGVRPGFEG.

The protein belongs to the universal ribosomal protein uL15 family. As to quaternary structure, part of the 50S ribosomal subunit.

Functionally, binds to the 23S rRNA. This is Large ribosomal subunit protein uL15 from Desulfitobacterium hafniense (strain Y51).